A 122-amino-acid polypeptide reads, in one-letter code: uncharacterized protein (122 aa).

Polar residues predominate over residues 1 to 10; it reads MGTGLRSQSL. Positions 1 to 68 are disordered; the sequence is MGTGLRSQSL…GQEWLPGSLG (68 aa). The span at 40-56 shows a compositional bias: basic and acidic residues; that stretch reads QGREKSRSSDGGPERLD.

This is an uncharacterized protein from Bos taurus (Bovine).